The chain runs to 481 residues: MQVLSVTPEIFPLIKTGGLADVTGALPVALAAKGVTMRTLIPGFPAVMEGFKKRKAVYQYPLLQGGKASIHAVQIAGLDLFVLDAPHLFDRPGGPYGNASGADWPDNWRRFAALSQAGADIAGGAISGYLPEIVHAHDWQSAMTLAYMRYGKAVGTPSMMTVHNLAFQGQFGAGIFGELGLPAVAMALDGVEYYGGVGFLKAGLQAAWAITTVSPTYAQEIRSPEFGMGLDGLINMRSSDLYGIVNGIDTAIWDPETDKHLVSNYTATTLKARAPNRAAVEERFGLDRDDSPIVCVISRLTWQKGMDILATVIDGIVATGARLAILGSGDAGLEGALLAAAARHRGRIGVVIGYDEGLSHTMQGGCDAIIIPSRFEPCGLTQLYGLRYGCVPVVARTGGLADTIIDANEAAMAAGVATGLQFAPNNGGAMLHAIRRLVDAYADPAAFETIQRQGMKADVSWDKSAEKYLELYRLLLSKRVA.

K15 contributes to the ADP-alpha-D-glucose binding site.

It belongs to the glycosyltransferase 1 family. Bacterial/plant glycogen synthase subfamily.

It carries out the reaction [(1-&gt;4)-alpha-D-glucosyl](n) + ADP-alpha-D-glucose = [(1-&gt;4)-alpha-D-glucosyl](n+1) + ADP + H(+). It participates in glycan biosynthesis; glycogen biosynthesis. Functionally, synthesizes alpha-1,4-glucan chains using ADP-glucose. This Mesorhizobium japonicum (strain LMG 29417 / CECT 9101 / MAFF 303099) (Mesorhizobium loti (strain MAFF 303099)) protein is Glycogen synthase.